We begin with the raw amino-acid sequence, 361 residues long: Nicotinate-nucleotide--dimethylbenzimidazole phosphoribosyltransferase (361 aa).

The Proton acceptor role is filled by Glu320.

This sequence belongs to the CobT family. In terms of assembly, homodimer.

The enzyme catalyses 5,6-dimethylbenzimidazole + nicotinate beta-D-ribonucleotide = alpha-ribazole 5'-phosphate + nicotinate + H(+). It functions in the pathway nucleoside biosynthesis; alpha-ribazole biosynthesis; alpha-ribazole from 5,6-dimethylbenzimidazole: step 1/2. Its function is as follows. Catalyzes the synthesis of alpha-ribazole-5'-phosphate from nicotinate mononucleotide (NAMN) and 5,6-dimethylbenzimidazole (DMB). The polypeptide is Nicotinate-nucleotide--dimethylbenzimidazole phosphoribosyltransferase (Shigella boydii serotype 18 (strain CDC 3083-94 / BS512)).